The sequence spans 332 residues: L-lactate dehydrogenase A chain (332 aa).

Residues 29–57 (GAVG…VEDK) and R99 contribute to the NAD(+) site. Substrate contacts are provided by R106, N138, and R169. Residue N138 participates in NAD(+) binding. The Proton acceptor role is filled by H193. T248 contributes to the substrate binding site.

The protein belongs to the LDH/MDH superfamily. LDH family. In terms of assembly, homotetramer.

It localises to the cytoplasm. The enzyme catalyses (S)-lactate + NAD(+) = pyruvate + NADH + H(+). The protein operates within fermentation; pyruvate fermentation to lactate; (S)-lactate from pyruvate: step 1/1. Its function is as follows. Interconverts simultaneously and stereospecifically pyruvate and lactate with concomitant interconversion of NADH and NAD(+). This is L-lactate dehydrogenase A chain (LDHA) from Caiman crocodilus apaporiensis (Rio Apaporis caiman).